A 506-amino-acid polypeptide reads, in one-letter code: Probable alpha-L-arabinofuranosidase B (506 aa).

Residues 1 to 26 (MSSGLSLERACAVALGIVASASLVAA) form the signal peptide. The catalytic stretch occupies residues 27 to 343 (GPCDIYSSGG…ADIVAAKYAI (317 aa)). 3 disulfides stabilise this stretch: Cys29-Cys39, Cys89-Cys94, and Cys184-Cys185. N-linked (GlcNAc...) asparagine glycosylation is present at Asn91. Asp227 contributes to the substrate binding site. The Nucleophile role is filled by Glu229. The substrate site is built by Asn230 and Gly304. Asp305 acts as the Proton donor in catalysis. The segment at 344-506 (ASLTSGPALT…VSWVVSTGFA (163 aa)) is ABD. The cysteines at positions 409 and 447 are disulfide-linked. Residues His424, Asn426, Phe427, Asp443, His471, Glu473, Leu476, and Asp496 each contribute to the substrate site.

This sequence belongs to the glycosyl hydrolase 54 family.

It is found in the secreted. The catalysed reaction is Hydrolysis of terminal non-reducing alpha-L-arabinofuranoside residues in alpha-L-arabinosides.. The protein operates within glycan metabolism; L-arabinan degradation. Functionally, alpha-L-arabinofuranosidase involved in the degradation of arabinoxylan, a major component of plant hemicellulose. Able to hydrolyze 1,5-, 1,3- and 1,2-alpha-linkages not only in L-arabinofuranosyl oligosaccharides, but also in polysaccharides containing terminal non-reducing L-arabinofuranoses in side chains, like L-arabinan, arabinogalactan and arabinoxylan. This chain is Probable alpha-L-arabinofuranosidase B (abfB), found in Aspergillus flavus (strain ATCC 200026 / FGSC A1120 / IAM 13836 / NRRL 3357 / JCM 12722 / SRRC 167).